The following is a 239-amino-acid chain: Phosphoribosylaminoimidazole-succinocarboxamide synthase (239 aa).

This sequence belongs to the SAICAR synthetase family.

The catalysed reaction is 5-amino-1-(5-phospho-D-ribosyl)imidazole-4-carboxylate + L-aspartate + ATP = (2S)-2-[5-amino-1-(5-phospho-beta-D-ribosyl)imidazole-4-carboxamido]succinate + ADP + phosphate + 2 H(+). It participates in purine metabolism; IMP biosynthesis via de novo pathway; 5-amino-1-(5-phospho-D-ribosyl)imidazole-4-carboxamide from 5-amino-1-(5-phospho-D-ribosyl)imidazole-4-carboxylate: step 1/2. This Campylobacter hominis (strain ATCC BAA-381 / DSM 21671 / CCUG 45161 / LMG 19568 / NCTC 13146 / CH001A) protein is Phosphoribosylaminoimidazole-succinocarboxamide synthase.